We begin with the raw amino-acid sequence, 515 residues long: Bifunctional purine biosynthesis protein PurH (515 aa).

The MGS-like domain maps to Met-1–Val-145.

The protein belongs to the PurH family.

The enzyme catalyses (6R)-10-formyltetrahydrofolate + 5-amino-1-(5-phospho-beta-D-ribosyl)imidazole-4-carboxamide = 5-formamido-1-(5-phospho-D-ribosyl)imidazole-4-carboxamide + (6S)-5,6,7,8-tetrahydrofolate. It carries out the reaction IMP + H2O = 5-formamido-1-(5-phospho-D-ribosyl)imidazole-4-carboxamide. It participates in purine metabolism; IMP biosynthesis via de novo pathway; 5-formamido-1-(5-phospho-D-ribosyl)imidazole-4-carboxamide from 5-amino-1-(5-phospho-D-ribosyl)imidazole-4-carboxamide (10-formyl THF route): step 1/1. Its pathway is purine metabolism; IMP biosynthesis via de novo pathway; IMP from 5-formamido-1-(5-phospho-D-ribosyl)imidazole-4-carboxamide: step 1/1. This Streptococcus equi subsp. equi (strain 4047) protein is Bifunctional purine biosynthesis protein PurH.